A 211-amino-acid polypeptide reads, in one-letter code: Endo-1,4-beta-xylanase A (211 aa).

Residues 1-27 (MKVTAAFAGLLVTAFAAPVPEPVLVSR) form the signal peptide. One can recognise a GH11 domain in the interval 28–210 (SAGINYVQNY…GAGSASVTIS (183 aa)). Glutamate 106 acts as the Nucleophile in catalysis. Residues cysteine 119 and cysteine 138 are joined by a disulfide bond. Glutamate 197 serves as the catalytic Proton donor.

The protein belongs to the glycosyl hydrolase 11 (cellulase G) family.

The protein localises to the secreted. It catalyses the reaction Endohydrolysis of (1-&gt;4)-beta-D-xylosidic linkages in xylans.. It participates in glycan degradation; xylan degradation. In terms of biological role, endo-1,4-beta-xylanase involved in the hydrolysis of xylan, a major structural heterogeneous polysaccharide found in plant biomass representing the second most abundant polysaccharide in the biosphere, after cellulose. This chain is Endo-1,4-beta-xylanase A (xynA), found in Aspergillus niger.